Here is a 1042-residue protein sequence, read N- to C-terminus: Isoleucine--tRNA ligase (1042 aa).

The 'HIGH' region motif lies at 48–58; the sequence is PFATGLPHFGH. Positions 594–598 match the 'KMSKS' region motif; that stretch reads KMSKS. Lysine 597 provides a ligand contact to ATP.

It belongs to the class-I aminoacyl-tRNA synthetase family. IleS type 2 subfamily. In terms of assembly, monomer. Zn(2+) serves as cofactor.

It is found in the cytoplasm. It catalyses the reaction tRNA(Ile) + L-isoleucine + ATP = L-isoleucyl-tRNA(Ile) + AMP + diphosphate. In terms of biological role, catalyzes the attachment of isoleucine to tRNA(Ile). As IleRS can inadvertently accommodate and process structurally similar amino acids such as valine, to avoid such errors it has two additional distinct tRNA(Ile)-dependent editing activities. One activity is designated as 'pretransfer' editing and involves the hydrolysis of activated Val-AMP. The other activity is designated 'posttransfer' editing and involves deacylation of mischarged Val-tRNA(Ile). The polypeptide is Isoleucine--tRNA ligase (Borreliella burgdorferi (strain ZS7) (Borrelia burgdorferi)).